A 212-amino-acid polypeptide reads, in one-letter code: TATA-box-binding protein 2 (212 aa).

A run of 2 repeats spans residues 30-114 (THPE…KKIG) and 120-201 (SNFN…YPIL).

This sequence belongs to the TBP family. In terms of assembly, belongs to the TFIID complex together with the TBP-associated factors (TAFs). Binds DNA as monomer.

Its subcellular location is the nucleus. Functionally, general transcription factor that functions at the core of the DNA-binding multiprotein factor TFIID. Binding of TFIID to the TATA box is the initial transcriptional step of the pre-initiation complex (PIC), playing a role in the activation of eukaryotic genes transcribed by RNA polymerase II. The sequence is that of TATA-box-binding protein 2 from Entamoeba histolytica (strain ATCC 30459 / HM-1:IMSS / ABRM).